We begin with the raw amino-acid sequence, 1225 residues long: Chromosome-associated kinesin KIF4 (1225 aa).

The Kinesin motor domain occupies 9–338 (IPVRVVRCRP…LRYADRARKI (330 aa)). 88–95 (GQTGSGKT) contributes to the ATP binding site. A coiled-coil region spans residues 352 to 1003 (ELNHLKQQVQ…LKQKMLLVQV (652 aa)). Disordered regions lie at residues 498 to 520 (QDAA…FTTQ), 717 to 744 (NKRL…GMEG), and 1006 to 1047 (GQKL…PTPE). Polar residues predominate over residues 507 to 520 (GQVTKRSSDDFTTQ). The segment covering 719–738 (RLKDALQKQREAADKRKESQ) has biased composition (basic and acidic residues). Residues 1004–1225 (ASGQKLRRDQ…GCTPIKEEID (222 aa)) form a globular region.

Belongs to the TRAFAC class myosin-kinesin ATPase superfamily. Kinesin family. Chromokinesin subfamily. Requires [2Fe-2S] cluster as cofactor. [4Fe-4S] cluster is required as a cofactor. Expressed in proliferating cells; neuroepithelium of embryos.

It localises to the nucleus. Its subcellular location is the chromosome. The protein resides in the cytoplasm. It is found in the cytoskeleton. Its function is as follows. Iron-sulfur (Fe-S) cluster binding motor protein that has a role in chromosome segregation during mitosis. Required for mitotic chromosomal positioning and bipolar spindle stabilization. In Gallus gallus (Chicken), this protein is Chromosome-associated kinesin KIF4 (KIF4).